Here is a 145-residue protein sequence, read N- to C-terminus: MDTPVYLYTDGACKGNPGAGGWGVLMRYGSREKELFGGEAQTTNNRMELTAVIEGLKSLKRRCTVIICTDSQYVKNGMENWIHGWKRNGWKTAAKQPVKNDDLWQELDALVGQHQVSWTWVKGHAGHAENERADDLANRGAAQFS.

Positions 1 to 142 (MDTPVYLYTD…ADDLANRGAA (142 aa)) constitute an RNase H type-1 domain. 4 residues coordinate Mg(2+): Asp-10, Glu-48, Asp-70, and Asp-134.

It belongs to the RNase H family. In terms of assembly, monomer. It depends on Mg(2+) as a cofactor.

The protein localises to the cytoplasm. The catalysed reaction is Endonucleolytic cleavage to 5'-phosphomonoester.. Endonuclease that specifically degrades the RNA of RNA-DNA hybrids. The polypeptide is Ribonuclease H (Neisseria gonorrhoeae (strain ATCC 700825 / FA 1090)).